The sequence spans 491 residues: E3 ubiquitin-protein ligase Hakai (491 aa).

2 disordered regions span residues 1-20 (MDHTDNELQGTNSSGSLGGL) and 33-61 (KQASKVKPAPRTQRTVSRMPAKAPQGDEE). The RING-type zinc-finger motif lies at 109–149 (CDKCGLPIKVYGRMIPCKHVFCYDCAILHEKKGDKMCPGCS). The segment at 148 to 206 (CSDPVQRIEQCTRGSLFMCSIVQGCKRTYLSQRDLQAHINHRHMRAGKPVTRASLENVH) is HYB domain. Residues 164–190 (FMCSIVQGCKRTYLSQRDLQAHINHRH) form a C2H2-type zinc finger. Phosphoserine is present on residues Ser201, Ser285, and Ser290. The tract at residues 255 to 491 (QPHEDIRAPP…DQTRYRPYYQ (237 aa)) is disordered. Pro residues-rich tracts occupy residues 342 to 359 (APPPPPPPPISHPMPHPP), 372 to 389 (APPPPMTSAPPPITPPPG), and 399 to 423 (MNHPPPGPPPPQHGGPPVTAPPPHH). Residues 427-442 (NSLPQFTEDQGTLSPP) show a composition bias toward polar residues. The span at 457–478 (PRGPPPPPRMQGPPSQTPLPGP) shows a compositional bias: pro residues.

This sequence belongs to the Hakai family. Homodimer. Interacts with tyrosine-phosphorylated SRC substrates. Component of the WMM complex, a N6-methyltransferase complex composed of a catalytic subcomplex, named MAC, and of an associated subcomplex, named MACOM. The MAC subcomplex is composed of METTL3 and METTL14. The MACOM subcomplex is composed of WTAP, ZC3H13, CBLL1/HAKAI, VIRMA, and, in some cases of RBM15 (RBM15 or RBM15B). Also a component of a MACOM-like complex, named WTAP complex, composed of WTAP, ZC3H13, CBLL1, VIRMA, RBM15, BCLAF1 and THRAP3. Phosphorylated on tyrosine residues. Detected in heart, brain, spleen, lung, liver, skeletal muscle, kidney and testis.

The protein resides in the nucleus speckle. It localises to the nucleus. The protein localises to the nucleoplasm. Its subcellular location is the cytoplasm. It carries out the reaction S-ubiquitinyl-[E2 ubiquitin-conjugating enzyme]-L-cysteine + [acceptor protein]-L-lysine = [E2 ubiquitin-conjugating enzyme]-L-cysteine + N(6)-ubiquitinyl-[acceptor protein]-L-lysine.. Its pathway is protein modification; protein ubiquitination. Functionally, E3 ubiquitin-protein ligase that mediates ubiquitination of several tyrosine-phosphorylated Src substrates, including CDH1, CTTN and DOK1. Targets CDH1 for endocytosis and degradation. Associated component of the WMM complex, a complex that mediates N6-methyladenosine (m6A) methylation of RNAs, a modification that plays a role in the efficiency of mRNA splicing and RNA processing. Its function in the WMM complex is unknown. The protein is E3 ubiquitin-protein ligase Hakai of Mus musculus (Mouse).